The sequence spans 276 residues: Aquaporin-6 (276 aa).

Residues 1 to 22 (MEPGLCNRAYLLVGGLWTAISK) are Cytoplasmic-facing. A helical membrane pass occupies residues 23–43 (ALFAEFLATGLYVFFGVGSVL). Over 44–51 (PWPVALPS) the chain is Extracellular. A helical transmembrane segment spans residues 52–70 (VLQVAITFNLATATAVQIS). Residues 71 to 75 (WKTSG) are Cytoplasmic-facing. Residues 76–85 (AHANPAVTLA) constitute an intramembrane region (discontinuously helical). The short motif at 79-81 (NPA) is the NPA 1 element. Residues 86-96 (YLVGSHISLPR) are Cytoplasmic-facing. A helical membrane pass occupies residues 97-118 (AVAYIAAQLAGATVGAALLYGV). Residues 119-138 (TPGGVRETLGVNVVHNSTST) lie on the Extracellular side of the membrane. Asparagine 134 carries an N-linked (GlcNAc...) asparagine glycan. The helical transmembrane segment at 139-159 (GQAVAVELVLTLQLVLCVFAS) threads the bilayer. Topologically, residues 160–165 (MDSRQT) are cytoplasmic. The chain crosses the membrane as a helical span at residues 166–185 (LGSPAAMIGTSVALGHLIGI). Residues 186–189 (YFTG) lie on the Extracellular side of the membrane. The segment at residues 190-202 (CSMNPARSFGPAV) is an intramembrane region (discontinuously helical). An NPA 2 motif is present at residues 193–195 (NPA). The Extracellular portion of the chain corresponds to 203-210 (IVGKFAVH). Residues 211 to 231 (WIFWVGPLTGAVLASLIYNFI) traverse the membrane as a helical segment. Topologically, residues 232 to 276 (LFPDTKTVAQRLAILVGTTKVEKVVDLEPQKKESQTNSEDTEVSV) are cytoplasmic.

The protein belongs to the MIP/aquaporin (TC 1.A.8) family. Homotetramer; each monomer provides an independent solute pore. N-glycosylated. As to expression, kidney.

The protein resides in the cytoplasmic vesicle membrane. The catalysed reaction is nitrate(in) = nitrate(out). It carries out the reaction iodide(out) = iodide(in). It catalyses the reaction bromide(in) = bromide(out). The enzyme catalyses chloride(in) = chloride(out). The catalysed reaction is Na(+)(in) = Na(+)(out). It carries out the reaction H2O(in) = H2O(out). It catalyses the reaction CO2(out) = CO2(in). The enzyme catalyses NH4(+)(in) = NH4(+)(out). Its activity is regulated as follows. Activated by mercury and pH-gated, anion permeability is observed at pH 5.5 and increases markedly at pH 4.0. Selectivity for chloride increases at low pH. The water channel activity is stimulated by mercury by opposition to other aquaporins. In terms of biological role, aquaporins form homotetrameric transmembrane channels, with each monomer independently mediating water transport across the plasma membrane along its osmotic gradient. Unlike classical aquaporins, AQP6 is an intracellular channel with selective anion permeability, particularly for nitrate, and exhibits very low water permeability. It may also facilitate the transport of gases, such as CO2 and NH4(+), as demonstrated in vitro. This chain is Aquaporin-6, found in Rattus norvegicus (Rat).